The primary structure comprises 162 residues: Caveolin-2 (162 aa).

Residues 1-86 (MGLEKEKLEC…FELVKFIFYR (86 aa)) lie on the Cytoplasmic side of the membrane. The helical intramembrane region spans 87–107 (LLTTLLAVPAAFILGVVFGVL). Topologically, residues 108 to 162 (SCIHIWLVMPVTRSFLMLLPSIQVVWKSVTDMFITPLFHSMGRSLSSIQVRTSDT) are cytoplasmic.

The protein belongs to the caveolin family. Homooligomer.

It is found in the golgi apparatus membrane. The protein localises to the cell membrane. The protein resides in the membrane. Its subcellular location is the caveola. May act as a scaffolding protein within caveolar membranes. Interacts directly with G-protein alpha subunits and can functionally regulate their activity. In Takifugu rubripes (Japanese pufferfish), this protein is Caveolin-2 (cav2).